A 363-amino-acid chain; its full sequence is Small ribosomal subunit biogenesis GTPase RsgA (363 aa).

The 157-residue stretch at 112–268 (HQQVIAANID…LIDTPGMREL (157 aa)) folds into the CP-type G domain. GTP is bound by residues 157–160 (TKAD) and 210–218 (GSSGAGKST). Positions 291, 296, 298, and 304 each coordinate Zn(2+). Residues 340-363 (RVAQNNRGKGSGKRPASVDRPGRR) form a disordered region.

It belongs to the TRAFAC class YlqF/YawG GTPase family. RsgA subfamily. In terms of assembly, monomer. Associates with 30S ribosomal subunit, binds 16S rRNA. Zn(2+) serves as cofactor.

It is found in the cytoplasm. One of several proteins that assist in the late maturation steps of the functional core of the 30S ribosomal subunit. Helps release RbfA from mature subunits. May play a role in the assembly of ribosomal proteins into the subunit. Circularly permuted GTPase that catalyzes slow GTP hydrolysis, GTPase activity is stimulated by the 30S ribosomal subunit. The sequence is that of Small ribosomal subunit biogenesis GTPase RsgA from Xanthomonas campestris pv. campestris (strain 8004).